Consider the following 81-residue polypeptide: Large ribosomal subunit protein bL31B (81 aa).

Belongs to the bacterial ribosomal protein bL31 family. Type B subfamily. Part of the 50S ribosomal subunit.

This is Large ribosomal subunit protein bL31B from Exiguobacterium sibiricum (strain DSM 17290 / CCUG 55495 / CIP 109462 / JCM 13490 / 255-15).